Here is a 197-residue protein sequence, read N- to C-terminus: Recombination protein RecR (197 aa).

The C4-type zinc-finger motif lies at C56–C71. Residues T79 to P174 form the Toprim domain.

Belongs to the RecR family.

Functionally, may play a role in DNA repair. It seems to be involved in an RecBC-independent recombinational process of DNA repair. It may act with RecF and RecO. The polypeptide is Recombination protein RecR (Rhodospirillum rubrum (strain ATCC 11170 / ATH 1.1.1 / DSM 467 / LMG 4362 / NCIMB 8255 / S1)).